We begin with the raw amino-acid sequence, 273 residues long: Endochitinase EP3 (273 aa).

An N-terminal signal peptide occupies residues 1–28; it reads MLTPTISKSISLVTILLVLQAFSNTTKA. N24 is a glycosylation site (N-linked (GlcNAc...) asparagine). Residues 29 to 63 enclose the Chitin-binding type-1 domain; the sequence is QNCGCSSELCCSQFGFCGNTSDYCGVGCQQGPCFA. Disulfide bonds link C31–C39, C33–C45, C38–C52, and C56–C61. The N-linked (GlcNAc...) asparagine glycan is linked to N47. A catalytic region spans residues 70–273; the sequence is VSVAEIVTQE…GVDPGNNLTC (204 aa). E136 functions as the Proton donor in the catalytic mechanism. Residues N157 and N270 are each glycosylated (N-linked (GlcNAc...) asparagine).

This sequence belongs to the glycosyl hydrolase 19 family. Chitinase class I subfamily. In terms of tissue distribution, expressed in cells surrounding embryos, stems, seedlings, pollen, roots, shoots, inflorescence, flowers, siliques and leaves. Present in seedpods and seed embryos, but not in roots, inflorescence stems, leaves and flowers.

The enzyme catalyses Random endo-hydrolysis of N-acetyl-beta-D-glucosaminide (1-&gt;4)-beta-linkages in chitin and chitodextrins.. In terms of biological role, probably involved in hypersensitive reaction upon Xanthomonas campestris infection. The polypeptide is Endochitinase EP3 (Arabidopsis thaliana (Mouse-ear cress)).